We begin with the raw amino-acid sequence, 469 residues long: Spermatogenesis-associated protein 21 (469 aa).

Disordered stretches follow at residues Met1–Gln76 and His99–Pro157. The span at Glu49–Arg61 shows a compositional bias: basic and acidic residues. The span at Ala62–Ala73 shows a compositional bias: low complexity. A compositionally biased stretch (polar residues) spans Ala105–Ala132. Pro residues predominate over residues Ala146–Pro157. Positions Glu198 to Ala225 form a coiled coil. In terms of domain architecture, EF-hand spans Val255–Phe290. Ca(2+) is bound by residues Asp268, Asn270, Asp272, Arg274, and Asp279. The interval Tyr424–His469 is disordered. Residues Asn450–Lys459 are compositionally biased toward basic and acidic residues.

Its function is as follows. Involved in the differentiation of haploid spermatids. This is Spermatogenesis-associated protein 21 (SPATA21) from Homo sapiens (Human).